The sequence spans 187 residues: Peptide deformylase 1 (187 aa).

The Fe cation site is built by cysteine 107 and histidine 149. Residue glutamate 150 is part of the active site. Histidine 153 is a binding site for Fe cation.

The protein belongs to the polypeptide deformylase family. It depends on Fe(2+) as a cofactor.

The catalysed reaction is N-terminal N-formyl-L-methionyl-[peptide] + H2O = N-terminal L-methionyl-[peptide] + formate. In terms of biological role, removes the formyl group from the N-terminal Met of newly synthesized proteins. Requires at least a dipeptide for an efficient rate of reaction. N-terminal L-methionine is a prerequisite for activity but the enzyme has broad specificity at other positions. The polypeptide is Peptide deformylase 1 (Nostoc sp. (strain PCC 7120 / SAG 25.82 / UTEX 2576)).